The chain runs to 418 residues: Glutamyl-tRNA reductase (418 aa).

Substrate is bound by residues 57 to 60 (TCNR), Ser113, 118 to 120 (DFE), and Gln124. The Nucleophile role is filled by Cys58. 193 to 198 (GTGKIG) serves as a coordination point for NADP(+).

This sequence belongs to the glutamyl-tRNA reductase family. In terms of assembly, homodimer.

The enzyme catalyses (S)-4-amino-5-oxopentanoate + tRNA(Glu) + NADP(+) = L-glutamyl-tRNA(Glu) + NADPH + H(+). The protein operates within porphyrin-containing compound metabolism; protoporphyrin-IX biosynthesis; 5-aminolevulinate from L-glutamyl-tRNA(Glu): step 1/2. Its function is as follows. Catalyzes the NADPH-dependent reduction of glutamyl-tRNA(Glu) to glutamate 1-semialdehyde (GSA). This Christiangramia forsetii (strain DSM 17595 / CGMCC 1.15422 / KT0803) (Gramella forsetii) protein is Glutamyl-tRNA reductase.